The sequence spans 1031 residues: Pre-mRNA-splicing factor SYF1 (1031 aa).

HAT repeat units follow at residues 28 to 60 (HLIP…NVKE), 90 to 122 (DGLQ…TRQS), 214 to 248 (KNGS…WAEI), and 250 to 269 (GGDA…PSLT). Positions 346-368 (VEEKVDGEQPQVEGQEQQPQEEP) are disordered. Over residues 353-368 (EQPQVEGQEQQPQEEP) the composition is skewed to low complexity. 8 HAT repeats span residues 452–487 (GEFE…FSET), 610–646 (PDLE…MELR), 664–698 (PKNT…LEES), 700–732 (GTVE…FLEE), 734–768 (KYFE…KFVK), 773–807 (KKLE…LEEE), 845–879 (FGLP…MERK), and 881–915 (GEID…FEIE). Disordered stretches follow at residues 948-969 (AAAS…QDAA) and 1003-1031 (TNAN…EDEF).

This sequence belongs to the crooked-neck family. As to quaternary structure, associated with the spliceosome.

The protein localises to the nucleus. Functionally, involved in pre-mRNA splicing and cell cycle progression. The polypeptide is Pre-mRNA-splicing factor SYF1 (SYF1) (Cryptococcus neoformans var. neoformans serotype D (strain B-3501A) (Filobasidiella neoformans)).